The following is a 273-amino-acid chain: Vitamin B12-binding protein (273 aa).

Positions 1–18 (MMKTLSSLLLLFSVSLQA) are cleaved as a signal peptide. The Fe/B12 periplasmic-binding domain occupies 23–273 (RVISLAPHAT…EHFASIEQKR (251 aa)). Cys-183 and Cys-263 form a disulfide bridge.

This sequence belongs to the BtuF family. The complex is composed of two ATP-binding proteins (BtuD), two transmembrane proteins (BtuC) and a solute-binding protein (BtuF).

The protein localises to the periplasm. Its function is as follows. Part of the ABC transporter complex BtuCDF involved in vitamin B12 import. Binds vitamin B12 and delivers it to the periplasmic surface of BtuC. In Vibrio vulnificus (strain CMCP6), this protein is Vitamin B12-binding protein.